Here is a 336-residue protein sequence, read N- to C-terminus: tRNA N6-adenosine threonylcarbamoyltransferase (336 aa).

Fe cation is bound by residues H114 and H118. Substrate contacts are provided by residues 136 to 140 (LVSGG), D169, G182, D186, and N275. A Fe cation-binding site is contributed by D301.

Belongs to the KAE1 / TsaD family. Fe(2+) serves as cofactor.

The protein resides in the cytoplasm. The enzyme catalyses L-threonylcarbamoyladenylate + adenosine(37) in tRNA = N(6)-L-threonylcarbamoyladenosine(37) in tRNA + AMP + H(+). Its function is as follows. Required for the formation of a threonylcarbamoyl group on adenosine at position 37 (t(6)A37) in tRNAs that read codons beginning with adenine. Is involved in the transfer of the threonylcarbamoyl moiety of threonylcarbamoyl-AMP (TC-AMP) to the N6 group of A37, together with TsaE and TsaB. TsaD likely plays a direct catalytic role in this reaction. In Streptococcus pneumoniae (strain JJA), this protein is tRNA N6-adenosine threonylcarbamoyltransferase.